Consider the following 215-residue polypeptide: Peroxiredoxin-5, mitochondrial (215 aa).

The transit peptide at 1 to 53 (MGLAGVCVLRRSAGYILGGAARQSVAATAAARRRSEGGWASGGVRSFSRAAAA) directs the protein to the mitochondrion. Residues 57–215 (IKVGDAIPAV…SLAPSIISQL (159 aa)) enclose the Thioredoxin domain. An N6-acetyllysine modification is found at K76. At K84 the chain carries N6-acetyllysine; alternate. K84 bears the N6-succinyllysine; alternate mark. C101 (cysteine sulfenic acid (-SOH) intermediate) is an active-site residue. A lipid anchor (S-palmitoyl cysteine) is attached at C101. Cysteines 101 and 205 form a disulfide. At K117 the chain carries N6-succinyllysine. Phosphoserine occurs at positions 172 and 183. Residues 213 to 215 (SQL) carry the Microbody targeting signal motif.

It belongs to the peroxiredoxin family. Prx5 subfamily. Monomer. S-palmitoylated. Palmitoylation occurs on the active site, inhibiting its reactivity; therefore PRDX5 palmitoylation status determines its antioxidant capacity. In terms of processing, S-palmitoylated. Depalmitoylated by ABHD10.

The protein resides in the mitochondrion. Its subcellular location is the cytoplasm. It localises to the peroxisome matrix. It carries out the reaction a hydroperoxide + [thioredoxin]-dithiol = an alcohol + [thioredoxin]-disulfide + H2O. In terms of biological role, thiol-specific peroxidase that catalyzes the reduction of hydrogen peroxide and organic hydroperoxides to water and alcohols, respectively. Plays a role in cell protection against oxidative stress by detoxifying peroxides and as sensor of hydrogen peroxide-mediated signaling events. The sequence is that of Peroxiredoxin-5, mitochondrial (PRDX5) from Chlorocebus aethiops (Green monkey).